Here is a 311-residue protein sequence, read N- to C-terminus: Probable porphobilinogen deaminase (311 aa).

S-(dipyrrolylmethanemethyl)cysteine is present on C237. The segment at 270 to 289 is disordered; that stretch reads SKTGDKNNPKSLGQSAGEEL.

This sequence belongs to the HMBS family. Dipyrromethane is required as a cofactor.

It carries out the reaction 4 porphobilinogen + H2O = hydroxymethylbilane + 4 NH4(+). It functions in the pathway porphyrin-containing compound metabolism; protoporphyrin-IX biosynthesis; coproporphyrinogen-III from 5-aminolevulinate: step 2/4. Functionally, tetrapolymerization of the monopyrrole PBG into the hydroxymethylbilane pre-uroporphyrinogen in several discrete steps. In Nitrosopumilus maritimus (strain SCM1), this protein is Probable porphobilinogen deaminase.